The following is a 171-amino-acid chain: Small ribosomal subunit protein uS5 (171 aa).

Positions 16 to 79 (LREKMISVNR…EEARRKLVKI (64 aa)) constitute an S5 DRBM domain.

It belongs to the universal ribosomal protein uS5 family. In terms of assembly, part of the 30S ribosomal subunit. Contacts proteins S4 and S8.

Its function is as follows. With S4 and S12 plays an important role in translational accuracy. In terms of biological role, located at the back of the 30S subunit body where it stabilizes the conformation of the head with respect to the body. In Thiobacillus denitrificans (strain ATCC 25259 / T1), this protein is Small ribosomal subunit protein uS5.